Reading from the N-terminus, the 256-residue chain is Deoxyribose-phosphate aldolase (256 aa).

D102 (proton donor/acceptor) is an active-site residue. The Schiff-base intermediate with acetaldehyde role is filled by K165. K197 acts as the Proton donor/acceptor in catalysis.

Belongs to the DeoC/FbaB aldolase family. DeoC type 2 subfamily.

The protein resides in the cytoplasm. The catalysed reaction is 2-deoxy-D-ribose 5-phosphate = D-glyceraldehyde 3-phosphate + acetaldehyde. The protein operates within carbohydrate degradation; 2-deoxy-D-ribose 1-phosphate degradation; D-glyceraldehyde 3-phosphate and acetaldehyde from 2-deoxy-alpha-D-ribose 1-phosphate: step 2/2. In terms of biological role, catalyzes a reversible aldol reaction between acetaldehyde and D-glyceraldehyde 3-phosphate to generate 2-deoxy-D-ribose 5-phosphate. The sequence is that of Deoxyribose-phosphate aldolase from Shewanella sp. (strain MR-7).